The chain runs to 368 residues: G-protein coupled receptor 62 (368 aa).

The Extracellular segment spans residues 1–18; that stretch reads MANSTGLNASEVAGSLGL. N3 and N8 each carry an N-linked (GlcNAc...) asparagine glycan. A helical membrane pass occupies residues 19 to 39; it reads ILAAVVEVGALLGNGALLVVV. At 40–53 the chain is on the cytoplasmic side; the sequence is LRTPGLRDALYLAH. Residues 54-74 traverse the membrane as a helical segment; that stretch reads LCVVDLLAAASIMPLGLLAAP. Over 75-91 the chain is Extracellular; it reads PPGLGRVRLGPAPCRAA. A helical transmembrane segment spans residues 92–112; the sequence is RFLSAALLPACTLGVAALGLA. Residues 113-129 are Cytoplasmic-facing; it reads RYRLIVHPLRPGSRPPP. Residues 130–150 traverse the membrane as a helical segment; it reads VLVLTAVWAAAGLLGALSLLG. The Extracellular portion of the chain corresponds to 151-177; the sequence is TPPAPPPAPARCSVLAGGLGPFRPLWA. A helical membrane pass occupies residues 178-198; it reads LLAFALPALLLLGAYGGIFVV. Residues 199–239 lie on the Cytoplasmic side of the membrane; it reads ARRAALRPPRPARGSRLHSDSLDSRLSILPPLRPRLPGGKA. Residues 240 to 260 traverse the membrane as a helical segment; it reads ALAPALAVGQFAACWLPYGCA. Residues 261 to 272 are Extracellular-facing; it reads CLAPAARAAEAE. Residues 273-293 form a helical membrane-spanning segment; sequence AAVTWVAYSAFAAHPFLYGLL. Residues 294 to 368 lie on the Cytoplasmic side of the membrane; sequence QRPVRLALGR…YQGPPESSLS (75 aa). Positions 332–368 are disordered; sequence RPPEGPAVGPSEAPEQTPELAGGRSPAYQGPPESSLS.

This sequence belongs to the G-protein coupled receptor 1 family. In terms of assembly, homodimers. Forms heterodimer with MTNR1B. Interacts with ARRB1 and ARRB2 in a spontaneous and agonist-independent manner; leading to the internalization of GPR62 in the endosomal compartment. Expressed in brain; detected in the basal forebrain, frontal cortex, caudate, putamen, thalamus and hippocampus.

The protein localises to the cell membrane. Its subcellular location is the endosome membrane. In terms of biological role, orphan G-protein coupled receptor. Constitutively activates the G(q/11)/inositol phosphate and the G(s)-alpha/cAMP signaling pathways. Has spontaneous activity for beta-arrestin recruitment. Shows a reciprocal modulation of signaling functions with the melatonin receptor MTNR1B most likely through receptor heteromerization. In Homo sapiens (Human), this protein is G-protein coupled receptor 62 (GPR62).